The sequence spans 480 residues: MPKHTKKDPREGAPSATGEPQKQAAGRKLFGTDGVRGVANQPPMTPEMALRLGRAIAFVASHGKSRQVRVVIGKDTRLSGYMLETAIASGVCAMGGRVMLSGPIPTPAVAQLTQSMRADAGVVISASHNPYQDNGIKIFGPDGYKLPDTAEEEIERLMESHELDEARVVGAAIGSAVKLDDARGRYVVFCKNTFPTALSLDGVKIVVDAAHGAAYRVAPSVFTELGANVTALGVKPNGRNINRETGALHPEHVKAEVLKRGAAIGIALDGDADRVIMVDERGEVVDGDAIMALCALRMLRTGKLPRNTIVTTVMSNLGLERALKAQSGHVVRTAVGDRYVVEAMRNGGYSFGGEQSGHLIFLDHATTGDGIVAALQVLAIMMEEDKPLSELASKAMQRVPQVLENATFATRLPLDSMQRTRVTVDRIEKTLGDKGRILVRWSGTEPKLRVMVEGEDASTIGAYALEIIEAAKQDVAGASA.

The disordered stretch occupies residues 1–41 (MPKHTKKDPREGAPSATGEPQKQAAGRKLFGTDGVRGVANQ). Residue S127 is the Phosphoserine intermediate of the active site. Mg(2+) is bound by residues S127, D269, D271, and D273. Position 127 is a phosphoserine (S127).

Belongs to the phosphohexose mutase family. It depends on Mg(2+) as a cofactor. Post-translationally, activated by phosphorylation.

The enzyme catalyses alpha-D-glucosamine 1-phosphate = D-glucosamine 6-phosphate. In terms of biological role, catalyzes the conversion of glucosamine-6-phosphate to glucosamine-1-phosphate. This chain is Phosphoglucosamine mutase, found in Sorangium cellulosum (strain So ce56) (Polyangium cellulosum (strain So ce56)).